Consider the following 732-residue polypeptide: Catalase-peroxidase (732 aa).

Residues 1-20 form a disordered region; sequence MDKDSKRPVVGSTVRGGMSN. Residues 92 to 220 constitute a cross-link (tryptophyl-tyrosyl-methioninium (Trp-Tyr) (with M-246)); it reads WHSAGTYRMG…LAAVQMGLIY (129 aa). Residue His93 is the Proton acceptor of the active site. The segment at residues 220–246 is a cross-link (tryptophyl-tyrosyl-methioninium (Tyr-Met) (with W-92)); the sequence is YVNPEGPDGNPDPVAAGYDVIETFARM. His261 contacts heme b.

Belongs to the peroxidase family. Peroxidase/catalase subfamily. In terms of assembly, homodimer or homotetramer. Heme b serves as cofactor. Formation of the three residue Trp-Tyr-Met cross-link is important for the catalase, but not the peroxidase activity of the enzyme.

The enzyme catalyses H2O2 + AH2 = A + 2 H2O. The catalysed reaction is 2 H2O2 = O2 + 2 H2O. In terms of biological role, bifunctional enzyme with both catalase and broad-spectrum peroxidase activity. The sequence is that of Catalase-peroxidase from Desulfosudis oleivorans (strain DSM 6200 / JCM 39069 / Hxd3) (Desulfococcus oleovorans).